Reading from the N-terminus, the 381-residue chain is Cytosolic acyl coenzyme A thioester hydrolase (381 aa).

Residues 51-169 (LGHCVTMGRI…TLWYVPLSLK (119 aa)) enclose the HotDog ACOT-type 1 domain. Asparagine 67 is an active-site residue. Lysine 169 and lysine 199 each carry N6-acetyllysine. Residues 225–339 (SYSQSSLIHL…FFTYVSLNQE (115 aa)) enclose the HotDog ACOT-type 2 domain. Residue aspartate 256 is part of the active site. The residue at position 284 (lysine 284) is an N6-acetyllysine. Positions 342-381 (PMPVPQLVPETEDEKKRFEEGKGRYLQMKAKRQGHTEPQP) are disordered. Positions 354 to 364 (DEKKRFEEGKG) are enriched in basic and acidic residues.

Homohexamer. In terms of tissue distribution, widely expressed with highest levels in brain. High levels also found in thymus, large intestine and testis. Negligible in muscle and adipose tissue. In the central and peripheral nervous systems, displays a predominantly neuronal localization with highest expression in cell bodies and neurites.

It is found in the cytoplasm. Its subcellular location is the cytosol. The enzyme catalyses hexadecanoyl-CoA + H2O = hexadecanoate + CoA + H(+). It catalyses the reaction dodecanoyl-CoA + H2O = dodecanoate + CoA + H(+). The catalysed reaction is tetradecanoyl-CoA + H2O = tetradecanoate + CoA + H(+). It carries out the reaction decanoyl-CoA + H2O = decanoate + CoA + H(+). The enzyme catalyses octanoyl-CoA + H2O = octanoate + CoA + H(+). It catalyses the reaction octadecanoyl-CoA + H2O = octadecanoate + CoA + H(+). The catalysed reaction is (9Z)-octadecenoyl-CoA + H2O = (9Z)-octadecenoate + CoA + H(+). The protein operates within lipid metabolism; fatty acid metabolism. In terms of biological role, catalyzes the hydrolysis of acyl-CoAs into free fatty acids and coenzyme A (CoASH), regulating their respective intracellular levels. Preferentially hydrolyzes palmitoyl-CoA, but has a broad specificity acting on other fatty acyl-CoAs with chain-lengths of C8-C18. May play an important physiological function in brain. This Mus musculus (Mouse) protein is Cytosolic acyl coenzyme A thioester hydrolase (Acot7).